We begin with the raw amino-acid sequence, 133 residues long: Glutaredoxin-C4, chloroplastic (133 aa).

The segment covering 1–13 (MGMAQSSSSSSRP) has biased composition (low complexity). Residues 1–25 (MGMAQSSSSSSRPSDSEQLEEPSKP) are disordered. The transit peptide at 1–27 (MGMAQSSSSSSRPSDSEQLEEPSKPVM) directs the protein to the chloroplast. Positions 29–129 (LDKAKEIVAS…PLLTEAGAIA (101 aa)) constitute a Glutaredoxin domain. A disulfide bridge links cysteine 49 with cysteine 52.

This sequence belongs to the glutaredoxin family. CPYC subfamily.

It localises to the plastid. The protein localises to the chloroplast. In terms of biological role, has a glutathione-disulfide oxidoreductase activity in the presence of NADPH and glutathione reductase. Reduces low molecular weight disulfides and proteins. In Oryza sativa subsp. japonica (Rice), this protein is Glutaredoxin-C4, chloroplastic (GRXC4).